Reading from the N-terminus, the 365-residue chain is Protein RecA (365 aa).

73–80 (GPESSGKT) serves as a coordination point for ATP.

Belongs to the RecA family.

The protein resides in the cytoplasm. In terms of biological role, can catalyze the hydrolysis of ATP in the presence of single-stranded DNA, the ATP-dependent uptake of single-stranded DNA by duplex DNA, and the ATP-dependent hybridization of homologous single-stranded DNAs. It interacts with LexA causing its activation and leading to its autocatalytic cleavage. The protein is Protein RecA of Prochlorococcus marinus (strain MIT 9312).